The chain runs to 504 residues: MRVNPDELTKVIEERIKSYESGEIKEIGWVMQVSDGIVRAYGLKDVMTNELVEIETSEGEKIYGIAMNLEEDNVGIITLGDYKGIKEGDKLVRTNRIIEVPVGEKLLGRVVNPLGMPLDGKGEINTDDFYPIERKAMGVVTRKPVDTPLQTGLKVLDALIPIGRGQRELIIGDRQTGKTAIATDTIINQKGKNVFCIYVSIGQKSSGLARTIDNLEKYGAMDYTVVVAADASDPASLQYIAPYAGAAIGEYFMFNGKDALVIYDDLTKHAAAYREISLLLRRPPGREAYPGDIFYLHSRLLERASRLNENYGNGSLTALPIIETQANDISAYIPTNVISITDGQIYLETGLFNAGIRPAVNIGLSVSRVGGDAQTKAMKRVAGSLKLDLAQYRELESFTQFAADLDEATKKQLTKGEKLTELMKQPQYSPMEMEEQVAVIYAANEGYLDQIPTDRISDFERQFLAYLKENYRDTLNKIRESKDIADEIKKELNEAISKFLNVFR.

172 to 179 (GDRQTGKT) contacts ATP.

The protein belongs to the ATPase alpha/beta chains family. F-type ATPases have 2 components, CF(1) - the catalytic core - and CF(0) - the membrane proton channel. CF(1) has five subunits: alpha(3), beta(3), gamma(1), delta(1), epsilon(1). CF(0) has three main subunits: a(1), b(2) and c(9-12). The alpha and beta chains form an alternating ring which encloses part of the gamma chain. CF(1) is attached to CF(0) by a central stalk formed by the gamma and epsilon chains, while a peripheral stalk is formed by the delta and b chains.

It localises to the cell inner membrane. It catalyses the reaction ATP + H2O + 4 H(+)(in) = ADP + phosphate + 5 H(+)(out). Its function is as follows. Produces ATP from ADP in the presence of a proton gradient across the membrane. The alpha chain is a regulatory subunit. In Petrotoga mobilis (strain DSM 10674 / SJ95), this protein is ATP synthase subunit alpha.